Reading from the N-terminus, the 425-residue chain is MEMRNVKGTKDYLPEEQVLRNKIKRACEDTFERYGCKPLETPTLNMYELMSYKYGGGDEILKEIYTLQDQGKRDLALRYDLTIPFAKVVAMNPNIRLPFKRYEIGKVFRDGPIKQGRFREFIQCDVDIVGVESVMAEAELMSMAFELFQTLNLEVTIQYNNRKLLNGILQAIHIPTELTSDVILSLDKIEKIGIDGVRKDVLERGISEEMADTICNTVLSCLQLSIADFEEAFNNPLVADGVNELQQLQQYLIALGINENTIFNPFLARGLTMYTGTVYEIFLKDGSITSSIGSGGRYDNIIGAFRGDNMNYPTVGISFGLDVIYTALSQKETVSSTADVFIIPLGTELQCLQIAQQLRSTTSLKIELELAGRKLKRALNYANKENIPYVLIIGEEEICTETVMLRNMKEGSEVKVPLSSLSNYL.

This sequence belongs to the class-II aminoacyl-tRNA synthetase family. In terms of assembly, homodimer.

The protein localises to the cytoplasm. The enzyme catalyses tRNA(His) + L-histidine + ATP = L-histidyl-tRNA(His) + AMP + diphosphate + H(+). This chain is Histidine--tRNA ligase 1, found in Bacillus thuringiensis subsp. konkukian (strain 97-27).